The sequence spans 704 residues: MLKDLNKVRNIGIMAHIDAGKTTTTERILFYTGINRKVGETHDGASTTDWMEQEKERGITITSAAVTCFWNGNQVNIIDTPGHVDFTVEVERSLRVLDGAVAVFDGKEGVEPQSEQVWRQAAKYDVPRICFVNKMDKLGADFYFTVQTIIDRLGAKPLVMQLPIGAEDDFDGVVDLLEMKAITWRGKVETGAEPVIEEIPADLADKAAEYREKLVETVAESDEALMEKYFGGEELTIEELKAGIRKLTVNSEVYPVLCGTAYRNKGVQPLLDAVIDYLPTPLDIGEVHGHKVGDETVDLVRKPSVDEPFSALAFKIAAHPFFGKLTFVRVYSGIVEPGAQVANSTKGKNERIGKLFQMHANKENPVDEARAGNIYAFIGLKDTTTGDTLCDKNDQIILESMDFPDPVIKVSIEPKTKSDQEKLGTAIQKLSEEDPTFTVELDEESGQTVIGGMGELHLDVLVDRMKREFKVEANVGNPQVAYRETIRKPVEKLEYTHKKQTGGSGQFAKVIIGIEPYAPEAETLEEGESATYKFENAVTGGRVPKEYIPSVDAGIQDAMQYGYLAGFPLVNIKATLIDGAYHEVDSSEMAFKLAGSQALKEAVAKAKPVLLEPLMAVEVITPEEYMGDVIGDINSRRGQVSAMDDRAGAKVVKAKVPLSEMFGYVGDLRSRTQGRANYTMIFDSYAEVPTNVAAEIVAERNGTA.

Residues 6 to 282 enclose the tr-type G domain; sequence NKVRNIGIMA…AVIDYLPTPL (277 aa). GTP contacts are provided by residues 15–22, 79–83, and 133–136; these read AHIDAGKT, DTPGH, and NKMD.

This sequence belongs to the TRAFAC class translation factor GTPase superfamily. Classic translation factor GTPase family. EF-G/EF-2 subfamily.

It localises to the cytoplasm. Catalyzes the GTP-dependent ribosomal translocation step during translation elongation. During this step, the ribosome changes from the pre-translocational (PRE) to the post-translocational (POST) state as the newly formed A-site-bound peptidyl-tRNA and P-site-bound deacylated tRNA move to the P and E sites, respectively. Catalyzes the coordinated movement of the two tRNA molecules, the mRNA and conformational changes in the ribosome. In Corynebacterium diphtheriae (strain ATCC 700971 / NCTC 13129 / Biotype gravis), this protein is Elongation factor G.